The following is a 474-amino-acid chain: GTPase Der (474 aa).

2 EngA-type G domains span residues 2–166 (LRIA…NVPE) and 212–385 (LKIA…ETVS). GTP contacts are provided by residues 8-15 (GRPNVGKS), 55-59 (DTGGV), 118-121 (NKAD), 218-225 (GRPNVGKS), 265-269 (DTAGL), and 330-333 (NKWD). The region spanning 386-470 (SKVPTPVVNK…PFDLEFKEKT (85 aa)) is the KH-like domain.

Belongs to the TRAFAC class TrmE-Era-EngA-EngB-Septin-like GTPase superfamily. EngA (Der) GTPase family. Associates with the 50S ribosomal subunit.

GTPase that plays an essential role in the late steps of ribosome biogenesis. This Chlamydia caviae (strain ATCC VR-813 / DSM 19441 / 03DC25 / GPIC) (Chlamydophila caviae) protein is GTPase Der.